A 182-amino-acid polypeptide reads, in one-letter code: ATP-dependent protease subunit HslV (182 aa).

The active site involves T10. Positions 166, 169, and 172 each coordinate Na(+).

It belongs to the peptidase T1B family. HslV subfamily. In terms of assembly, a double ring-shaped homohexamer of HslV is capped on each side by a ring-shaped HslU homohexamer. The assembly of the HslU/HslV complex is dependent on binding of ATP.

It localises to the cytoplasm. It carries out the reaction ATP-dependent cleavage of peptide bonds with broad specificity.. With respect to regulation, allosterically activated by HslU binding. Protease subunit of a proteasome-like degradation complex believed to be a general protein degrading machinery. In Rickettsia bellii (strain OSU 85-389), this protein is ATP-dependent protease subunit HslV.